The following is a 359-amino-acid chain: Peptide chain release factor 1 (359 aa).

Residue Gln233 is modified to N5-methylglutamine.

This sequence belongs to the prokaryotic/mitochondrial release factor family. Post-translationally, methylated by PrmC. Methylation increases the termination efficiency of RF1.

The protein resides in the cytoplasm. Its function is as follows. Peptide chain release factor 1 directs the termination of translation in response to the peptide chain termination codons UAG and UAA. This is Peptide chain release factor 1 from Orientia tsutsugamushi (strain Ikeda) (Rickettsia tsutsugamushi).